A 318-amino-acid chain; its full sequence is Lipoyl synthase (318 aa).

Cysteine 64, cysteine 69, cysteine 75, cysteine 90, cysteine 94, cysteine 97, and serine 304 together coordinate [4Fe-4S] cluster. The Radical SAM core domain occupies 76–293 (FSGGTATFMI…AEEGYKMGFK (218 aa)).

The protein belongs to the radical SAM superfamily. Lipoyl synthase family. [4Fe-4S] cluster serves as cofactor.

It is found in the cytoplasm. It catalyses the reaction [[Fe-S] cluster scaffold protein carrying a second [4Fe-4S](2+) cluster] + N(6)-octanoyl-L-lysyl-[protein] + 2 oxidized [2Fe-2S]-[ferredoxin] + 2 S-adenosyl-L-methionine + 4 H(+) = [[Fe-S] cluster scaffold protein] + N(6)-[(R)-dihydrolipoyl]-L-lysyl-[protein] + 4 Fe(3+) + 2 hydrogen sulfide + 2 5'-deoxyadenosine + 2 L-methionine + 2 reduced [2Fe-2S]-[ferredoxin]. The protein operates within protein modification; protein lipoylation via endogenous pathway; protein N(6)-(lipoyl)lysine from octanoyl-[acyl-carrier-protein]: step 2/2. Its function is as follows. Catalyzes the radical-mediated insertion of two sulfur atoms into the C-6 and C-8 positions of the octanoyl moiety bound to the lipoyl domains of lipoate-dependent enzymes, thereby converting the octanoylated domains into lipoylated derivatives. The polypeptide is Lipoyl synthase (Pseudomonas syringae pv. tomato (strain ATCC BAA-871 / DC3000)).